The chain runs to 923 residues: Ubiquitin carboxyl-terminal hydrolase 10 (923 aa).

Residues 19-134 (FTPEEEKRIV…GGPPIERKLI (116 aa)) form the DUSP domain. The tract at residues 65–91 (NECSTGESSEAPRPGPIDNHDIIESDS) is disordered. A USP domain is found at 304-895 (AGLSNLGNTC…AAYVLFYRRV (592 aa)). The active-site Nucleophile is Cys313. His853 (proton acceptor) is an active-site residue.

The protein belongs to the peptidase C19 family.

It catalyses the reaction Thiol-dependent hydrolysis of ester, thioester, amide, peptide and isopeptide bonds formed by the C-terminal Gly of ubiquitin (a 76-residue protein attached to proteins as an intracellular targeting signal).. Recognizes and hydrolyzes the peptide bond at the C-terminal Gly of ubiquitin. Involved in the processing of poly-ubiquitin precursors as well as that of ubiquitinated proteins. This is Ubiquitin carboxyl-terminal hydrolase 10 (UBP10) from Arabidopsis thaliana (Mouse-ear cress).